The primary structure comprises 77 residues: Acyl carrier protein (77 aa).

The region spanning 1–76 is the Carrier domain; it reads MSLEDDVKAI…DVIKYIQERQ (76 aa). Residue Ser36 is modified to O-(pantetheine 4'-phosphoryl)serine.

It belongs to the acyl carrier protein (ACP) family. 4'-phosphopantetheine is transferred from CoA to a specific serine of apo-ACP by AcpS. This modification is essential for activity because fatty acids are bound in thioester linkage to the sulfhydryl of the prosthetic group.

It localises to the cytoplasm. It participates in lipid metabolism; fatty acid biosynthesis. Carrier of the growing fatty acid chain in fatty acid biosynthesis. The polypeptide is Acyl carrier protein (Chlamydia trachomatis serovar A (strain ATCC VR-571B / DSM 19440 / HAR-13)).